Here is a 270-residue protein sequence, read N- to C-terminus: Phosphatidylglycerol--prolipoprotein diacylglyceryl transferase (270 aa).

Helical transmembrane passes span 19–39 (FPVY…LWLA), 56–76 (LVLI…VIFE), 92–112 (QGGL…ILFA), and 116–136 (GVSF…GQAI). Position 138 (Arg138) interacts with a 1,2-diacyl-sn-glycero-3-phospho-(1'-sn-glycerol). The next 3 membrane-spanning stretches (helical) occupy residues 178–198 (HPTF…LLAL), 206–226 (GELF…VEGL), and 236–256 (LRIA…FIIV).

Belongs to the Lgt family.

It is found in the cell membrane. It catalyses the reaction L-cysteinyl-[prolipoprotein] + a 1,2-diacyl-sn-glycero-3-phospho-(1'-sn-glycerol) = an S-1,2-diacyl-sn-glyceryl-L-cysteinyl-[prolipoprotein] + sn-glycerol 1-phosphate + H(+). It participates in protein modification; lipoprotein biosynthesis (diacylglyceryl transfer). Functionally, catalyzes the transfer of the diacylglyceryl group from phosphatidylglycerol to the sulfhydryl group of the N-terminal cysteine of a prolipoprotein, the first step in the formation of mature lipoproteins. The sequence is that of Phosphatidylglycerol--prolipoprotein diacylglyceryl transferase from Bacillus cereus (strain Q1).